The sequence spans 129 residues: Small ribosomal subunit protein uS11 (129 aa).

This sequence belongs to the universal ribosomal protein uS11 family. In terms of assembly, part of the 30S ribosomal subunit. Interacts with proteins S7 and S18. Binds to IF-3.

Located on the platform of the 30S subunit, it bridges several disparate RNA helices of the 16S rRNA. Forms part of the Shine-Dalgarno cleft in the 70S ribosome. The polypeptide is Small ribosomal subunit protein uS11 (Lactiplantibacillus plantarum (strain ATCC BAA-793 / NCIMB 8826 / WCFS1) (Lactobacillus plantarum)).